A 309-amino-acid chain; its full sequence is tRNA dimethylallyltransferase (309 aa).

10-17 (GPTASGKT) is an ATP binding site. Substrate is bound at residue 12–17 (TASGKT). 2 interaction with substrate tRNA regions span residues 35–38 (DSAL) and 240–245 (RCVGYR).

The protein belongs to the IPP transferase family. As to quaternary structure, monomer. The cofactor is Mg(2+).

The catalysed reaction is adenosine(37) in tRNA + dimethylallyl diphosphate = N(6)-dimethylallyladenosine(37) in tRNA + diphosphate. Functionally, catalyzes the transfer of a dimethylallyl group onto the adenine at position 37 in tRNAs that read codons beginning with uridine, leading to the formation of N6-(dimethylallyl)adenosine (i(6)A). In Baumannia cicadellinicola subsp. Homalodisca coagulata, this protein is tRNA dimethylallyltransferase.